A 503-amino-acid polypeptide reads, in one-letter code: ATP synthase subunit alpha (503 aa).

An ATP-binding site is contributed by 170 to 177 (GDRATGKT).

It belongs to the ATPase alpha/beta chains family. As to quaternary structure, F-type ATPases have 2 components, CF(1) - the catalytic core - and CF(0) - the membrane proton channel. CF(1) has five subunits: alpha(3), beta(3), gamma(1), delta(1), epsilon(1). CF(0) has three main subunits: a(1), b(2) and c(9-12). The alpha and beta chains form an alternating ring which encloses part of the gamma chain. CF(1) is attached to CF(0) by a central stalk formed by the gamma and epsilon chains, while a peripheral stalk is formed by the delta and b chains.

It localises to the cell inner membrane. The catalysed reaction is ATP + H2O + 4 H(+)(in) = ADP + phosphate + 5 H(+)(out). Its function is as follows. Produces ATP from ADP in the presence of a proton gradient across the membrane. The alpha chain is a regulatory subunit. The chain is ATP synthase subunit alpha from Aquifex aeolicus (strain VF5).